Here is a 282-residue protein sequence, read N- to C-terminus: Protoheme IX farnesyltransferase (282 aa).

The next 9 membrane-spanning stretches (helical) occupy residues 13–33 (VAGM…GAAG), 36–56 (MVTS…FNQI), 74–96 (ASGR…PALI), 101–120 (AGGV…YNGV), 129–149 (AFSL…GWLA), 156–176 (SPEI…HFWL), 207–227 (LWYA…FIAE), 232–252 (IAVC…LASP), and 261–281 (VSML…SGII).

This sequence belongs to the UbiA prenyltransferase family. Protoheme IX farnesyltransferase subfamily.

It localises to the cell inner membrane. The catalysed reaction is heme b + (2E,6E)-farnesyl diphosphate + H2O = Fe(II)-heme o + diphosphate. Its pathway is porphyrin-containing compound metabolism; heme O biosynthesis; heme O from protoheme: step 1/1. In terms of biological role, converts heme B (protoheme IX) to heme O by substitution of the vinyl group on carbon 2 of heme B porphyrin ring with a hydroxyethyl farnesyl side group. This chain is Protoheme IX farnesyltransferase, found in Oleidesulfovibrio alaskensis (strain ATCC BAA-1058 / DSM 17464 / G20) (Desulfovibrio alaskensis).